Here is a 140-residue protein sequence, read N- to C-terminus: MTQSLVCPDTVSRVSSVLNRNSRQFGKKHLFDQDEETCWNSDQGPSQWVSLEFPQCVQITQLQVQFQGGFSSRHSCLEGSRGGEALSKIVDFYPEDTNALQTFSIPTMEVDRLKLTFEDTTDFFGRVVIYHLRVLGEKAG.

The protein belongs to the NR2C2AP family. In terms of assembly, interacts with NR2C2/TR4.

Its subcellular location is the nucleus. In terms of biological role, may act as a repressor of NR2C2-mediated transactivation by suppressing the binding between NR2C2/TR4 and the TR4-response element in target genes. This is Nuclear receptor 2C2-associated protein (Nr2c2ap) from Mus musculus (Mouse).